A 344-amino-acid polypeptide reads, in one-letter code: Phenylalanine--tRNA ligase alpha subunit (344 aa).

Residue Glu256 participates in Mg(2+) binding.

The protein belongs to the class-II aminoacyl-tRNA synthetase family. Phe-tRNA synthetase alpha subunit type 1 subfamily. As to quaternary structure, tetramer of two alpha and two beta subunits. It depends on Mg(2+) as a cofactor.

Its subcellular location is the cytoplasm. It catalyses the reaction tRNA(Phe) + L-phenylalanine + ATP = L-phenylalanyl-tRNA(Phe) + AMP + diphosphate + H(+). The chain is Phenylalanine--tRNA ligase alpha subunit from Onion yellows phytoplasma (strain OY-M).